Consider the following 430-residue polypeptide: MRRFVTLLIALLCLSATAVQAQVEIRAPGQQTIAVANTQLVPLSGTPLPAIAAELHDVMAADLELSGLFRQLDPAAFLDDARRPGLTSSRVDFNQWALLGAEILIKGGYQLQGERLLVDFRLYDVVHRRLLTGRRYAGLRRDVRTMAHKFADQVLKSVTGREGPFSSRIAYIDNRTGHKELYLMDTDGANALRLTDHRSIVLNPDFSPNGREVIYTSYRRGNPDLYRKQLSTGQEARLAFKKGLNIAARFRPDGREIALTQSATGNPELMLLGTDGSRRRRLTSHWGIDVDPSWSPAGDRLAFVSDRQGNPHIFVMDLLGGQTARLTANGKYNATPAWSPDGKRIAFTRLEKGVFDIYTVRPDGTDERRLTFGPGNKEHPRWSPDSRFLVYSSDQDGRKGIYIMRADGTGIRRISAGGGQCQHPAWSGQR.

Positions 1 to 21 (MRRFVTLLIALLCLSATAVQA) are cleaved as a signal peptide.

Belongs to the TolB family. As to quaternary structure, the Tol-Pal system is composed of five core proteins: the inner membrane proteins TolA, TolQ and TolR, the periplasmic protein TolB and the outer membrane protein Pal. They form a network linking the inner and outer membranes and the peptidoglycan layer.

The protein localises to the periplasm. Functionally, part of the Tol-Pal system, which plays a role in outer membrane invagination during cell division and is important for maintaining outer membrane integrity. The polypeptide is Tol-Pal system protein TolB (Syntrophotalea carbinolica (strain DSM 2380 / NBRC 103641 / GraBd1) (Pelobacter carbinolicus)).